The primary structure comprises 177 residues: O-acetyl-ADP-ribose deacetylase (177 aa).

A Macro domain is found at 1-175 (MKSRIHVLQG…LYNRLLTQQG (175 aa)). Substrate is bound by residues 11–12 (DI), Asn25, 33–35 (GVD), and 122–126 (STGVY). Asp35 acts as the Proton acceptor in catalysis.

It belongs to the MacroD-type family. YmdB subfamily. In terms of assembly, homodimer. Interacts with RNase III.

It carries out the reaction 3''-O-acetyl-ADP-D-ribose + H2O = ADP-D-ribose + acetate + H(+). It catalyses the reaction 2''-O-acetyl-ADP-D-ribose + H2O = ADP-D-ribose + acetate + H(+). Deacetylates O-acetyl-ADP ribose to yield ADP-ribose and free acetate. Down-regulates ribonuclease 3 (RNase III) activity. Acts by interacting directly with the region of the ribonuclease that is required for dimerization/activation. This is O-acetyl-ADP-ribose deacetylase from Escherichia fergusonii (strain ATCC 35469 / DSM 13698 / CCUG 18766 / IAM 14443 / JCM 21226 / LMG 7866 / NBRC 102419 / NCTC 12128 / CDC 0568-73).